The sequence spans 311 residues: Acetyl-coenzyme A carboxylase carboxyl transferase subunit alpha (311 aa).

Positions 36-286 (NLEKETQKVY…SDYVLKAIEE (251 aa)) constitute a CoA carboxyltransferase C-terminal domain.

It belongs to the AccA family. Acetyl-CoA carboxylase is a heterohexamer composed of biotin carboxyl carrier protein (AccB), biotin carboxylase (AccC) and two subunits each of ACCase subunit alpha (AccA) and ACCase subunit beta (AccD).

It is found in the cytoplasm. It carries out the reaction N(6)-carboxybiotinyl-L-lysyl-[protein] + acetyl-CoA = N(6)-biotinyl-L-lysyl-[protein] + malonyl-CoA. Its pathway is lipid metabolism; malonyl-CoA biosynthesis; malonyl-CoA from acetyl-CoA: step 1/1. Its function is as follows. Component of the acetyl coenzyme A carboxylase (ACC) complex. First, biotin carboxylase catalyzes the carboxylation of biotin on its carrier protein (BCCP) and then the CO(2) group is transferred by the carboxyltransferase to acetyl-CoA to form malonyl-CoA. This chain is Acetyl-coenzyme A carboxylase carboxyl transferase subunit alpha, found in Campylobacter lari (strain RM2100 / D67 / ATCC BAA-1060).